A 132-amino-acid chain; its full sequence is MAISFDKAFGIHQYALSVRSKRAEVLSSNIANADTPGFKARDINFSQALEEAQHQQGFGLATTSEKHFALQSDAPGLTQYRNPLQPDTGDGNTVDVQQERSEFLRNSLEYQTSLEFMNSKISGLLKALKGEQ.

It belongs to the flagella basal body rod proteins family. The basal body constitutes a major portion of the flagellar organelle and consists of a number of rings mounted on a central rod. In Gram-negative bacteria, at least four rings, L, P, S and M are present, whereas Gram-positive bacteria lack the L and P rings. The rod consists of about 26 subunits of FlgG in the distal portion, and FlgB, FlgC and FlgF build up the proximal portion of the rod with about 6 subunits each. Rod assembly occurs by export via the flagellum-specific pathway of its constituent proteins and by their incorporation into the rod structure in the probable order of FlgB, FlgC, FlgF and FlgG. Another protein, FliE, also assembles onto the stable rod structure.

Its subcellular location is the bacterial flagellum basal body. In terms of biological role, structural component of flagellum, the bacterial motility apparatus. Part of the rod structure of flagellar basal body. The polypeptide is Flagellar basal body rod protein FlgB (Aeromonas hydrophila).